The sequence spans 154 residues: Urease accessory protein UreE (154 aa).

A disordered region spans residues tyrosine 135–alanine 154.

Belongs to the UreE family.

It localises to the cytoplasm. Functionally, involved in urease metallocenter assembly. Binds nickel. Probably functions as a nickel donor during metallocenter assembly. The sequence is that of Urease accessory protein UreE from Paracoccus denitrificans (strain Pd 1222).